The primary structure comprises 309 residues: Phytoene synthase (309 aa).

This sequence belongs to the phytoene/squalene synthase family. Requires ATP as cofactor. It depends on Mn(2+) as a cofactor. Mg(2+) serves as cofactor.

It functions in the pathway carotenoid biosynthesis; phytoene biosynthesis. Involved in the biosynthesis of carotenoids. Catalyzes the condensation of two molecules of geranylgeranyl diphosphate (GGPP) to give prephytoene diphosphate (PPPP) and the subsequent rearrangement of the cyclopropylcarbinyl intermediate to yield phytoene. This is Phytoene synthase (crtB) from Pseudescherichia vulneris (Escherichia vulneris).